The following is a 467-amino-acid chain: Cysteine--tRNA ligase (467 aa).

C28 contributes to the Zn(2+) binding site. The 'HIGH' region motif lies at 30 to 40 (MTVYDHCHLGH). C209, H234, and E238 together coordinate Zn(2+). The short motif at 266–270 (KMSKS) is the 'KMSKS' region element. K269 contacts ATP.

The protein belongs to the class-I aminoacyl-tRNA synthetase family. As to quaternary structure, monomer. Requires Zn(2+) as cofactor.

It localises to the cytoplasm. It catalyses the reaction tRNA(Cys) + L-cysteine + ATP = L-cysteinyl-tRNA(Cys) + AMP + diphosphate. The polypeptide is Cysteine--tRNA ligase (Nitrosomonas eutropha (strain DSM 101675 / C91 / Nm57)).